Reading from the N-terminus, the 386-residue chain is Synaptotagmin-5 (386 aa).

Pro residues predominate over residues 1-16 (MFPEPPTPGSPAPETP). Positions 1–21 (MFPEPPTPGSPAPETPPDSSR) are disordered. The Vesicular portion of the chain corresponds to 1–24 (MFPEPPTPGSPAPETPPDSSRIRQ). A helical transmembrane segment spans residues 25–45 (GAVPAWVLATILLGSGLLVFS). Topologically, residues 46–386 (SCFCLYRKRC…PDRARPIPAP (341 aa)) are cytoplasmic. C2 domains are found at residues 108–227 (QLGR…QAWR) and 239–372 (KLGD…AQWH). Ca(2+) is bound by residues L138, D139, D145, D197, F198, D199, S202, D205, D270, D276, D330, and D332.

It belongs to the synaptotagmin family. As to quaternary structure, homodimer. Interacts with both alpha- and beta-tubulin. Ca(2+) is required as a cofactor. As to expression, expressed in kidney, adipose tissue, lung and heart, as well as at higher levels in brain.

It localises to the cytoplasmic vesicle. The protein resides in the secretory vesicle. Its subcellular location is the synaptic vesicle membrane. It is found in the recycling endosome membrane. Functionally, may be involved in Ca(2+)-dependent exocytosis of secretory vesicles through Ca(2+) and phospholipid binding to the C2 domain or may serve as Ca(2+) sensors in the process of vesicular trafficking and exocytosis. Regulates the Ca(2+)-dependent secretion of norepinephrine in PC12 cells. Required for export from the endocytic recycling compartment to the cell surface. The polypeptide is Synaptotagmin-5 (Syt5) (Rattus norvegicus (Rat)).